The sequence spans 344 residues: ATPase GET3 (344 aa).

26 to 33 lines the ATP pocket; it reads KGGVGKTT. D57 is an active-site residue. ATP is bound by residues E239 and N266. Zn(2+) is bound by residues C276 and C279.

Belongs to the arsA ATPase family. Homodimer. Component of the Golgi to ER traffic (GET) complex, which is composed of GET1, GET2 and GET3. Within the complex, GET1 and GET2 form a heterotetramer which is stabilized by phosphatidylinositol binding and which binds to the GET3 homodimer. Interacts with the chloride channel protein GEF1.

The protein resides in the cytoplasm. The protein localises to the endoplasmic reticulum. Its subcellular location is the golgi apparatus. ATPase required for the post-translational delivery of tail-anchored (TA) proteins to the endoplasmic reticulum. Recognizes and selectively binds the transmembrane domain of TA proteins in the cytosol. This complex then targets to the endoplasmic reticulum by membrane-bound receptors GET1 and GET2, where the tail-anchored protein is released for insertion. This process is regulated by ATP binding and hydrolysis. ATP binding drives the homodimer towards the closed dimer state, facilitating recognition of newly synthesized TA membrane proteins. ATP hydrolysis is required for insertion. Subsequently, the homodimer reverts towards the open dimer state, lowering its affinity for the GET1-GET2 receptor, and returning it to the cytosol to initiate a new round of targeting. Cooperates with the HDEL receptor ERD2 to mediate the ATP-dependent retrieval of resident ER proteins that contain a C-terminal H-D-E-L retention signal from the Golgi to the ER. Involved in low-level resistance to the oxyanions arsenite and arsenate, and in heat tolerance. This chain is ATPase GET3, found in Komagataella phaffii (strain GS115 / ATCC 20864) (Yeast).